Reading from the N-terminus, the 261-residue chain is (3R)-3-hydroxyacyl-CoA dehydrogenase (261 aa).

Residues 15-23 and 42-43 each bind NAD(+); these read LVTGAGSGI and DL. S60 is subject to Phosphoserine. 74 to 76 lines the NAD(+) pocket; it reads ADV. S156 lines the substrate pocket. K160 carries the N6-succinyllysine modification. The active-site Proton acceptor is Y169. NAD(+) contacts are provided by residues 169–173 and 202–204; these read YAASK and IAT. An N6-succinyllysine modification is found at K173.

Belongs to the short-chain dehydrogenases/reductases (SDR) family. Heterotetramer with CBR4; contains two molecules of HSD17B8 and CBR4. Widely expressed, particularly abundant in prostate, placenta and kidney. Expressed at protein level in various tissues like brain, cerebellum, heart, lung, kidney, ovary, testis, adrenals and prostate.

The protein resides in the mitochondrion matrix. The catalysed reaction is a (3R)-3-hydroxyacyl-CoA + NAD(+) = a 3-oxoacyl-CoA + NADH + H(+). The enzyme catalyses 17beta-estradiol + NAD(+) = estrone + NADH + H(+). It catalyses the reaction testosterone + NAD(+) = androst-4-ene-3,17-dione + NADH + H(+). It carries out the reaction 17beta-hydroxy-5alpha-androstan-3-one + NAD(+) = 5alpha-androstan-3,17-dione + NADH + H(+). Its pathway is steroid biosynthesis; estrogen biosynthesis. It functions in the pathway lipid metabolism; fatty acid biosynthesis. The protein operates within lipid metabolism; mitochondrial fatty acid beta-oxidation. In terms of biological role, required for the solubility and assembly of the heterotetramer 3-ketoacyl-[acyl carrier protein] (ACP) reductase functional complex (KAR or KAR1) that forms part of the mitochondrial fatty acid synthase (mtFAS). Alpha-subunit of the KAR complex that acts as a scaffold protein required for the stability of carbonyl reductase type-4 (CBR4, beta-subunit of the KAR complex) and for its 3-ketoacyl-ACP reductase activity, thereby participating in mitochondrial fatty acid biosynthesis. Catalyzes the NAD-dependent conversion of (3R)-3-hydroxyacyl-CoA into 3-ketoacyl-CoA (3-oxoacyl-CoA) with no chain length preference; this enzymatic activity is not needed for the KAR function. Prefers (3R)-3-hydroxyacyl-CoA over (3S)-3-hydroxyacyl-CoA and displays enzymatic activity only in the presence of NAD(+). Cooperates with enoyl-CoA hydratase 1 in mitochondria, together they constitute an alternative route to the auxiliary enzyme pathways for the breakdown of Z-PUFA (cis polyunsaturated fatty acid) enoyl-esters. NAD-dependent 17-beta-hydroxysteroid dehydrogenase with highest activity towards estradiol (17beta-estradiol or E2). Has very low activity towards testosterone and dihydrotestosterone (17beta-hydroxy-5alpha-androstan-3-one). Primarily an oxidative enzyme, it can switch to a reductive mode determined in the appropriate physiologic milieu and catalyze the reduction of estrone (E1) to form biologically active 17beta-estradiol. The chain is (3R)-3-hydroxyacyl-CoA dehydrogenase (HSD17B8) from Homo sapiens (Human).